The following is a 125-amino-acid chain: Cardioactive peptide (125 aa).

An N-terminal signal peptide occupies residues 1-22; it reads MTVSRVCLLLLVALVYLDCCYA. Positions 23–42 are excised as a propeptide; the sequence is ASIPRNFDPRLSEEIVMAPK. A disulfide bridge connects residues cysteine 47 and cysteine 53. Position 53 is a cysteine amide (cysteine 53). The propeptide occupies 57 to 125; that stretch reads RSQGPPGMPA…RRKQKEAYIQ (69 aa).

As to expression, abdominal perivisceral organ; major neurohemal release site. Expressed in 116 neurons in post-embryonic central nervous system. Nine pairs of cells are observed in the brain, 4.5 pairs in the subesophageal ganglion, three pairs in each thoracic ganglion (T1-T3), three pairs in the first abdominal ganglion (A1), five pairs each in the second to sixth abdominal ganglia (A2-A6) and 7.5 pairs in the terminal ganglion. Expressed in every ganglion in each post-embryonic stage, except in the thoracic ganglia of first- and second-instar larvae. Colocalizes with CAP2b in median neurosecretory cells during the last larval instar through to adults.

It localises to the secreted. Functionally, cardioregulatory neurohormone that increases heart beat rate during adult wing inflation; has no effect on beat amplitude. The effect of CCAP is both ino- and chronotropic. This Manduca sexta (Tobacco hawkmoth) protein is Cardioactive peptide.